Reading from the N-terminus, the 958-residue chain is MEGALTARDKVGVQDFVLLDAYTSESAFLENLRKRFRENLIYTYIGTLLVSVNPYQELGIYTASQMELYQGVNFFELPPHVYAIADNAYRMMCSELNNHFILISGESGAGKTEASKKILQYFAVTCPMTESLQIARDRLLLSIPVLEAFGNAKTLRNDNSSRFGKYMDIQFDFQGVPVGGHIISYLIEKSRVVYQNHGERNFHIFYQLLAGGGSERLASLGLERDPQLYKYLSQGHCARESPISDKNDWETVCGAFSVIGFTEADLENLFGIIASVLHLGNVCFKGDKQGCASVPDTHEIKWIAKLLGVCPAVLLEALTHRKIEAKTEEVICPLTVELSVYARDAMAKAVYGRTFTWLVNRINSSLVNKDFTQKTVIGLLDIYGFEVFDKNGFEQFCINYCNEKLQQLLIERTLKAEQAEYESEGIEWETVQYFNNKIICDLVEERHRGIISILDEECIRPGPATDLSFLEKLEEKVGKHAHFQTRKLAGPKGRKRIGWLEFCLLHYAGEVTYCTKGFLEKNNDLLYRHLKEVLCSSKNSILRECFLVAELENRRRPPTVGTQFKNSLSSLLEILISKEPSYIRCIKPNERKEPSKFDDFLISHQIKYLGLMEHLRVRRAGFAYRRKYEHFLQRYKSLCPDTWPHWHGPPGEGVERLIKYIGYQPQDYKLGKTKIFIRFPRTLFATEDAFEFSKHQLVSRIQATYKGCLGRREYMKKRQAATKLEAHWRGVLARKEIKRRRWAVQIIRRFVKGFINRDKPLCPDNEEFVVLVRKNYILNLRYHVPKNVLDKSWLRPPGILENASNLLRRMCTRNLVRKYCRGISAERKAMMQQKVVTSEIFRGKKEGYAESLNQLFAGSRLGVSTSSLSDGILVIHISPADKQQKGDVILQCEHIFEVATKLAMLIRKEHTVRVVQGSLQFYVSPGREGTIVFETGEEDQVYKDKNGQLRVVSAGKKT.

The region spanning 12 to 691 is the Myosin motor domain; that stretch reads GVQDFVLLDA…TLFATEDAFE (680 aa). ATP is bound at residue 105-112; the sequence is GESGAGKT. At S365 the chain carries Phosphoserine. An actin-binding region spans residues 568–590; that stretch reads LSSLLEILISKEPSYIRCIKPNE. IQ domains lie at 694 to 716 and 717 to 746; these read KHQL…EYMK and KRQA…AVQI. Residues 773–955 form the TH1 domain; that stretch reads RKNYILNLRY…NGQLRVVSAG (183 aa).

Belongs to the TRAFAC class myosin-kinesin ATPase superfamily. Myosin family. In terms of tissue distribution, highly expressed in the central nervous system, including the forebrain, midbrain and lower medulla. In the lower medulla, it is broadly expressed throughout the reticular formation. It is expressed in the retrotrapezoid nucleus and the nucleus of the solitary tract, as well as motor neurons of the facial, vagal and ambiguus nuclei. Expressed in neonatal inner-ear organs.

In terms of biological role, myosins are actin-based motor molecules with ATPase activity. Unconventional myosins serve in intracellular movements. Their highly divergent tails are presumed to bind to membranous compartments, which would be moved relative to actin filaments. The polypeptide is Unconventional myosin-Ih (Myo1h) (Mus musculus (Mouse)).